The sequence spans 1591 residues: Dicer-like protein 1 (1591 aa).

Basic and acidic residues-rich tracts occupy residues 1-20 (MEVHDGLKSPDKAAKSRYDD) and 41-52 (SKPRKISERKRA). The tract at residues 1–52 (MEVHDGLKSPDKAAKSRYDDDRIDQDSEDEAVRLVANPDPSKPRKISERKRA) is disordered. The Helicase ATP-binding domain maps to 115-298 (LFERAKQKNT…SYERATHELE (184 aa)). ATP is bound at residue 128–135 (LDTGTGKT). Positions 242–245 (DEAH) match the DEAH box motif. The 169-residue stretch at 439–607 (KLIEILAECF…CLSLPKDRIM (169 aa)) folds into the Helicase C-terminal domain. Positions 639-729 (SLVVLAEFVA…KSTLAKVLPA (91 aa)) constitute a Dicer dsRNA-binding fold domain. In terms of domain architecture, PAZ spans 888 to 1012 (TTTDRVPYNF…LVLETLLISQ (125 aa)). 2 RNase III domains span residues 1050–1190 (IDIA…LTAQ) and 1243–1406 (CSQI…VDTG). Positions 1283, 1392, and 1395 each coordinate Mg(2+). A DRBM domain is found at 1440 to 1514 (THITSIITTQ…AKQAVAIYED (75 aa)). Zn(2+)-binding residues include Cys1452, His1485, Cys1526, and Cys1528.

It belongs to the helicase family. Dicer subfamily. Requires Mg(2+) as cofactor. The cofactor is Mn(2+).

In terms of biological role, dicer-like endonuclease which seems not to be involved in cleaving double-stranded RNA in the RNA interference (RNAi) pathway, contrary to its DCL2 counterpart. This is Dicer-like protein 1 (DCL1) from Pyricularia oryzae (strain 70-15 / ATCC MYA-4617 / FGSC 8958) (Rice blast fungus).